We begin with the raw amino-acid sequence, 279 residues long: Lyso-glycine lipid O-acyltransferase (279 aa).

The protein belongs to the O-acyltransferase GlsA family.

It carries out the reaction a lyso-glycine lipid + a fatty acyl-[ACP] = a glycine lipid + holo-[ACP]. The enzyme catalyses N-[(3R)-3-hydroxyhexadecanoyl]-glycine + hexadecanoyl-[ACP] = N-[(3R)-3-(hexadecanoyloxy)hexadecanoyl]-glycine + holo-[ACP]. It participates in lipid metabolism. In terms of biological role, is involved in the production of glycine lipids (GL), which are phosphorus-free membrane lipids. Catalyzes the second step of GL biosynthesis, i.e. the O-acylation of the hydroxyl group of lyso-glycine lipids, resulting in the production of the mature diacylated glycine lipids. This Phocaeicola vulgatus (strain ATCC 8482 / DSM 1447 / JCM 5826 / CCUG 4940 / NBRC 14291 / NCTC 11154) (Bacteroides vulgatus) protein is Lyso-glycine lipid O-acyltransferase.